The following is a 378-amino-acid chain: Metalloendoproteinase 2-MMP (378 aa).

The N-terminal stretch at 1–20 is a signal peptide; the sequence is MRFCVFGFLSLFLIVSPASA. The propeptide at 21-154 is activation peptide; the sequence is WFFPNSTAVP…SRTHLHAVKR (134 aa). N-linked (GlcNAc...) asparagine glycosylation is found at Asn25, Asn35, Asn46, Asn79, and Asn102. Positions 118-125 match the Cysteine switch motif; it reads PRCGNPDV. Residue Cys120 coordinates Zn(2+). N-linked (GlcNAc...) asparagine glycans are attached at residues Asn127, Asn143, and Asn203. His280 is a Zn(2+) binding site. Glu281 is an active-site residue. His284 and His290 together coordinate Zn(2+). N-linked (GlcNAc...) asparagine glycosylation is present at Asn330. The GPI-anchor amidated serine moiety is linked to residue Ser349. The propeptide at 350–378 is removed in mature form; it reads AAWRIDGSSRSTIVSLLLSTVGLVLWFLP.

The protein belongs to the peptidase M10A family. Matrix metalloproteinases (MMPs) subfamily. Zn(2+) serves as cofactor. In terms of tissue distribution, mostly expressed in roots, and, to a lower extent, in flowers, leaves and stems.

Its subcellular location is the cell membrane. Its activity is regulated as follows. Repressed by acetohydroxamic acid (AHA). In terms of biological role, matrix metalloproteinases (MMPs) or matrixins may play a role in the degradation and remodeling of the extracellular matrix (ECM) during development or in response to stresses. Required for plant growth, morphogenesis, and development with particular relevance for flowering and senescence. Active on McaPLGLDpaAR-NH(2) (QF24) and myelin basic protein (MBP) and, to some extent, on beta-casein. The polypeptide is Metalloendoproteinase 2-MMP (Arabidopsis thaliana (Mouse-ear cress)).